The following is a 253-amino-acid chain: Tryptophan synthase alpha chain (253 aa).

Active-site proton acceptor residues include Glu46 and Asp57.

Belongs to the TrpA family. As to quaternary structure, tetramer of two alpha and two beta chains.

It carries out the reaction (1S,2R)-1-C-(indol-3-yl)glycerol 3-phosphate + L-serine = D-glyceraldehyde 3-phosphate + L-tryptophan + H2O. Its pathway is amino-acid biosynthesis; L-tryptophan biosynthesis; L-tryptophan from chorismate: step 5/5. Functionally, the alpha subunit is responsible for the aldol cleavage of indoleglycerol phosphate to indole and glyceraldehyde 3-phosphate. This is Tryptophan synthase alpha chain from Dictyoglomus turgidum (strain DSM 6724 / Z-1310).